The primary structure comprises 495 residues: Potassium voltage-gated channel subfamily A member 1 (495 aa).

Positions 1 to 30 are disordered; it reads MTVMSGENADEASTAPGHPQDGSYPRQADH. The tetramerization domain stretch occupies residues 1 to 128; that stretch reads MTVMSGENAD…FYELGEEAME (128 aa). Over 1–164 the chain is Cytoplasmic; the sequence is MTVMSGENAD…LLFEYPESSG (164 aa). Phosphoserine is present on Ser-23. Residues 165 to 186 form a helical membrane-spanning segment; that stretch reads PARVIAIVSVMVILISIVIFCL. Residues 187–220 lie on the Extracellular side of the membrane; the sequence is ETLPELKDDKDFTGTIHRIDNTTVIYTSNIFTDP. N-linked (GlcNAc...) asparagine glycosylation is present at Asn-207. Residues 221–242 traverse the membrane as a helical segment; that stretch reads FFIVETLCIIWFSFELVVRFFA. Cys-243 carries S-palmitoyl cysteine lipidation. Over 243–253 the chain is Cytoplasmic; it reads CPSKTDFFKNI. Residues 254–274 traverse the membrane as a helical segment; the sequence is MNFIDIVAIIPYFITLGTEIA. At 275 to 287 the chain is on the extracellular side; it reads EQEGNQKGEQATS. Residues 288–308 traverse the membrane as a helical; Voltage-sensor segment; the sequence is LAILRVIRLVRVFRIFKLSRH. Residues 309-323 are Cytoplasmic-facing; sequence SKGLQILGQTLKASM. The interval 310–323 is S4-S5 linker; the sequence is KGLQILGQTLKASM. The residue at position 322 (Ser-322) is a Phosphoserine; by PKA. The chain crosses the membrane as a helical span at residues 324–345; it reads RELGLLIFFLFIGVILFSSAVY. At 346–359 the chain is on the extracellular side; it reads FAEAEEAESHFSSI. An intramembrane region (helical) is located at residues 360 to 371; it reads PDAFWWAVVSMT. A Selectivity filter motif is present at residues 372–377; it reads TVGYGD. An intramembrane segment occupies 372–379; the sequence is TVGYGDMY. Residues 380–386 lie on the Extracellular side of the membrane; it reads PVTIGGK. The chain crosses the membrane as a helical span at residues 387–415; it reads IVGSLCAIAGVLTIALPVPVIVSNFNYFY. At 416 to 495 the chain is on the cytoplasmic side; it reads HRETEGEEQA…VNKSKLLTDV (80 aa). A phosphoserine mark is found at Ser-437 and Ser-439. Ser-446 is subject to Phosphoserine; by PKA. Positions 493-495 match the PDZ-binding motif; the sequence is TDV.

This sequence belongs to the potassium channel family. A (Shaker) (TC 1.A.1.2) subfamily. Kv1.1/KCNA1 sub-subfamily. As to quaternary structure, homotetramer and heterotetramer with other channel-forming alpha subunits, such as KCNA2, KCNA4, KCNA5, KCNA6 and KCNA7. Channel activity is regulated by interaction with the beta subunits KCNAB1 and KCNAB2. Identified in a complex with KCNA2 and KCNAB2. Interacts (via C-terminus) with the PDZ domains of DLG1, DLG2 and DLG4. Interacts with LGI1 within a complex containing LGI1, KCNA4 and KCNAB1. Interacts (via N-terminus) with STX1A; this promotes channel inactivation. Interacts (via N-terminus) with the heterodimer formed by GNB1 and GNG2; this promotes channel inactivation. Can interact simultaneously with STX1A and the heterodimer formed by GNB1 and GNG2. Interacts (via cytoplasmic N-terminal domain) with KCNRG; this inhibits channel activity. Interacts with ANK3; this inhibits channel activity. Interacts with ADAM11. In terms of processing, N-glycosylated. Palmitoylated on Cys-243; which may be required for membrane targeting. Post-translationally, phosphorylated on tyrosine residues. Phosphorylation increases in response to NRG1; this inhibits channel activity. Phosphorylation at Ser-446 regulates channel activity by down-regulating expression at the cell membrane. In terms of tissue distribution, detected in brain. Expressed in cerebellar cortex basket cell terminals, the area surround the Purkinje cell soma, and the pinceaux expansions encircling the axon initial segment (at protein level). Detected in the juxtaparanodal regions of the nodes of Ranvier in myelinated axons. Detected in the paranodal region in sciatic nerve. Detected on cell bodies in cerebellum, dorsal and ventral cochlear nucleus, pontine reticular nucleus, mesencephalic trigeminal nucleus, motor trigeminal nucleus and the pricipal sensory trigeminal nucleus. Detected in terminal fields of basket cells in the cerebellum corpus medullare. Detected in hippocampus CA3 pyramidal neurons and in the hilus and stratum moleculare of the dentate gyrus. Detected in the central nucleus and the external nucleus of the inferior colliculus. Detected in fiber tracts in the optic tract, external medullary lamina, stria terminalis, medulla, ventral pallidum and substantia nigra. Detected in neurons from dorsal root ganglion. Detected in neurons in the medial nucleus of the trapezoid body. Detected in midbrain dopamine neuron axon terminals. Detected in brain cortex. Detected in brainstem. Detected in juxtaparanodal regions of the nodes of Ranvier in the vagus nerve, but only at very low levels in the heart. Detected in the islet of Langerhans. Detected at the luminal membrane in distal convoluted tubules in the kidney (at protein level). Detected in hippocampus, thalamus, neocortex and ventral brain cortex, including the piriform and entorhinal cortex and the amygdala. Detected in midbrain dopamine neurons. Detected in heart atrium, ventricle, sinoatrial node and atrioventricular node.

The protein localises to the cell membrane. Its subcellular location is the cell projection. It is found in the axon. It localises to the membrane. The protein resides in the perikaryon. The protein localises to the dendrite. Its subcellular location is the cell junction. It is found in the synapse. It localises to the cytoplasmic vesicle. The protein resides in the endoplasmic reticulum. The protein localises to the presynaptic cell membrane. Its subcellular location is the presynapse. It catalyses the reaction K(+)(in) = K(+)(out). Inhibited by 4-aminopyridine (4-AP), tetraethylammonium (TEA) and dendrotoxin (DTX), but not by charybdotoxin (CTX). Functionally, voltage-gated potassium channel that mediates transmembrane potassium transport in excitable membranes, primarily in the brain and the central nervous system, but also in the kidney. Contributes to the regulation of the membrane potential and nerve signaling, and prevents neuronal hyperexcitability. Forms tetrameric potassium-selective channels through which potassium ions pass in accordance with their electrochemical gradient. The channel alternates between opened and closed conformations in response to the voltage difference across the membrane. Can form functional homotetrameric channels and heterotetrameric channels that contain variable proportions of KCNA1, KCNA2, KCNA4, KCNA5, KCNA6, KCNA7, and possibly other family members as well; channel properties depend on the type of alpha subunits that are part of the channel. Channel properties are modulated by cytoplasmic beta subunits that regulate the subcellular location of the alpha subunits and promote rapid inactivation of delayed rectifier potassium channels. In vivo, membranes probably contain a mixture of heteromeric potassium channel complexes, making it difficult to assign currents observed in intact tissues to any particular potassium channel family member. Homotetrameric KCNA1 forms a delayed-rectifier potassium channel that opens in response to membrane depolarization, followed by slow spontaneous channel closure. In contrast, a heterotetrameric channel formed by KCNA1 and KCNA4 shows rapid inactivation. Regulates neuronal excitability in hippocampus, especially in mossy fibers and medial perforant path axons, preventing neuronal hyperexcitability. May function as down-stream effector for G protein-coupled receptors and inhibit GABAergic inputs to basolateral amygdala neurons. May contribute to the regulation of neurotransmitter release, such as gamma-aminobutyric acid (GABA) release. Plays a role in regulating the generation of action potentials and preventing hyperexcitability in myelinated axons of the vagus nerve, and thereby contributes to the regulation of heart contraction. Required for normal neuromuscular responses. Regulates the frequency of neuronal action potential firing in response to mechanical stimuli, and plays a role in the perception of pain caused by mechanical stimuli, but does not play a role in the perception of pain due to heat stimuli. Required for normal responses to auditory stimuli and precise location of sound sources, but not for sound perception. The use of toxins that block specific channels suggest that it contributes to the regulation of the axonal release of the neurotransmitter dopamine. Required for normal postnatal brain development and normal proliferation of neuronal precursor cells in the brain. Plays a role in the reabsorption of Mg(2+) in the distal convoluted tubules in the kidney and in magnesium ion homeostasis, probably via its effect on the membrane potential. In Mus musculus (Mouse), this protein is Potassium voltage-gated channel subfamily A member 1.